We begin with the raw amino-acid sequence, 210 residues long: Mediator of RNA polymerase II transcription subunit 20 (210 aa).

The protein belongs to the Mediator complex subunit 20 family. Component of the Mediator complex, which is composed of at least 21 subunits that form three structurally distinct submodules. The Mediator head module contains MED6, MED8, MED11, SRB4/MED17, SRB5/MED18, ROX3/MED19, SRB2/MED20 and SRB6/MED22, the middle module contains MED1, MED4, NUT1/MED5, MED7, CSE2/MED9, NUT2/MED10, SRB7/MED21 and SOH1/MED31, and the tail module contains MED2, PGD1/MED3, RGR1/MED14, GAL11/MED15 and SIN4/MED16. The head and the middle modules interact directly with RNA polymerase II, whereas the elongated tail module interacts with gene-specific regulatory proteins. MED1 interacts directly with MED4 and MED7. SRB2/MED20 interacts directly with SRB4/MED17 and SRB5/MED18.

The protein localises to the nucleus. Its function is as follows. Component of the Mediator complex, a coactivator involved in the regulated transcription of nearly all RNA polymerase II-dependent genes. Mediator functions as a bridge to convey information from gene-specific regulatory proteins to the basal RNA polymerase II transcription machinery. The Mediator complex, having a compact conformation in its free form, is recruited to promoters by direct interactions with regulatory proteins and serves for the assembly of a functional preinitiation complex with RNA polymerase II and the general transcription factors. The Mediator complex unfolds to an extended conformation and partially surrounds RNA polymerase II, specifically interacting with the unphosphorylated form of the C-terminal domain (CTD) of RNA polymerase II. The Mediator complex dissociates from the RNA polymerase II holoenzyme and stays at the promoter when transcriptional elongation begins. This is Mediator of RNA polymerase II transcription subunit 20 (SRB2) from Saccharomyces cerevisiae (strain ATCC 204508 / S288c) (Baker's yeast).